Consider the following 383-residue polypeptide: Na(+)/H(+) antiporter NhaA (383 aa).

The next 11 helical transmembrane spans lie at 10 to 30, 56 to 76, 91 to 111, 121 to 141, 150 to 170, 174 to 194, 206 to 226, 254 to 274, 289 to 308, 327 to 347, and 355 to 375; these read LIGGLILFSAALLAIVVNNSP, LMHWINDGLMAIYFLYIGLEI, IITPAIAAFAGLAMPSLIYLS, GWAIPSATDIAFTLGILALLG, LLVITIAIFDDIAAIAIIAIF, SLSLLSLSLGTLFILAMIICN, VVLGFFAWFCTIKSGVHATLA, PWIIYFILPVFAFANAGISFS, IIWGLFVGKQLGIFSILAVF, GISLLCGIGFTMSLFIGVLAF, and AIKIGVVVGSVLSGFFGYIVL.

Belongs to the NhaA Na(+)/H(+) (TC 2.A.33) antiporter family.

It localises to the cell inner membrane. It catalyses the reaction Na(+)(in) + 2 H(+)(out) = Na(+)(out) + 2 H(+)(in). In terms of biological role, na(+)/H(+) antiporter that extrudes sodium in exchange for external protons. The polypeptide is Na(+)/H(+) antiporter NhaA (Francisella tularensis subsp. mediasiatica (strain FSC147)).